We begin with the raw amino-acid sequence, 157 residues long: UPF0178 protein Nwi_2152 (157 aa).

It belongs to the UPF0178 family.

The chain is UPF0178 protein Nwi_2152 from Nitrobacter winogradskyi (strain ATCC 25391 / DSM 10237 / CIP 104748 / NCIMB 11846 / Nb-255).